Reading from the N-terminus, the 255-residue chain is Malonyl-[acyl-carrier protein] O-methyltransferase (255 aa).

The protein belongs to the methyltransferase superfamily.

It catalyses the reaction malonyl-[ACP] + S-adenosyl-L-methionine = malonyl-[ACP] methyl ester + S-adenosyl-L-homocysteine. The protein operates within cofactor biosynthesis; biotin biosynthesis. In terms of biological role, converts the free carboxyl group of a malonyl-thioester to its methyl ester by transfer of a methyl group from S-adenosyl-L-methionine (SAM). It allows to synthesize pimeloyl-ACP via the fatty acid synthetic pathway. In Porphyromonas gingivalis (strain ATCC BAA-308 / W83), this protein is Malonyl-[acyl-carrier protein] O-methyltransferase.